A 449-amino-acid chain; its full sequence is UDP-N-acetylmuramoylalanine--D-glutamate ligase (449 aa).

116 to 122 (GSNGKST) provides a ligand contact to ATP.

This sequence belongs to the MurCDEF family.

The protein localises to the cytoplasm. It catalyses the reaction UDP-N-acetyl-alpha-D-muramoyl-L-alanine + D-glutamate + ATP = UDP-N-acetyl-alpha-D-muramoyl-L-alanyl-D-glutamate + ADP + phosphate + H(+). Its pathway is cell wall biogenesis; peptidoglycan biosynthesis. Functionally, cell wall formation. Catalyzes the addition of glutamate to the nucleotide precursor UDP-N-acetylmuramoyl-L-alanine (UMA). This chain is UDP-N-acetylmuramoylalanine--D-glutamate ligase, found in Shewanella violacea (strain JCM 10179 / CIP 106290 / LMG 19151 / DSS12).